A 408-amino-acid polypeptide reads, in one-letter code: RNA exonuclease 4 (408 aa).

Positions 27 to 70 are disordered; the sequence is TKEKDVSNSKAHNSRSSQSPSSSLRSSSRIQRKSKHSQGVGQYM. The span at 40-55 shows a compositional bias: low complexity; it reads SRSSQSPSSSLRSSSR. One can recognise an Exonuclease domain in the interval 131 to 292; that stretch reads QYLAIDCEMV…YRLHKKEWER (162 aa). The segment covering 310 to 322 has biased composition (basic and acidic residues); that stretch reads PEHVLGKRGHDEK. The disordered stretch occupies residues 310 to 408; that stretch reads PEHVLGKRGH…GESWWEQPAA (99 aa). Gly residues predominate over residues 343–357; that stretch reads GNGGGRQQFPGGGRK. The segment covering 372 to 384 has biased composition (basic and acidic residues); that stretch reads QRVDENGRGDGTS.

It belongs to the REXO4 family.

It is found in the nucleus. Functionally, exoribonuclease involved in ribosome biosynthesis. Involved in the processing of ITS1, the internal transcribed spacer localized between the 18S and 5.8S rRNAs. This Cryptococcus neoformans var. neoformans serotype D (strain B-3501A) (Filobasidiella neoformans) protein is RNA exonuclease 4 (REX4).